The following is an 82-amino-acid chain: Small ribosomal subunit protein bS16 (82 aa).

This sequence belongs to the bacterial ribosomal protein bS16 family.

This Clostridium botulinum (strain Okra / Type B1) protein is Small ribosomal subunit protein bS16.